Reading from the N-terminus, the 479-residue chain is Small ribosomal subunit protein bS1 (479 aa).

S1 motif domains are found at residues 36-105 (GDIV…LSKK), 123-188 (DEAV…LSRR), 209-277 (GAIR…LSLK), and 294-363 (GQIV…LSLK). The segment at 429–466 (TAQMEKFAAAEAEAANAPVSNGSSRSEESSGGTLASDA) is disordered. The segment covering 437-460 (AAEAEAANAPVSNGSSRSEESSGG) has biased composition (low complexity).

It belongs to the bacterial ribosomal protein bS1 family. Binds uncharacterized protein MSMEG_2731/MSMEI_2664.

Binds mRNA, facilitating recognition of most mRNAs by the 30S ribosomal subunit during translation initiation. Plays a role in trans-translation; binds tmRNA (the product of the ssrA gene). Binds very poorly to pyrazinoic acid (POA), the active form of the prodrug pyrazinamide (PZA); POA does not disrupt trans-translation in this organism. M.smegmatis is resistant to the antibiotic PZA. In trans-translation Ala-aminoacylated transfer-messenger RNA (tmRNA, product of the ssrA gene; the 2 termini fold to resemble tRNA(Ala) while it encodes a short internal open reading frame (the tag peptide)) acts like a tRNA, entering the A-site of the ribosome and displacing the stalled mRNA (which is subsequently degraded). The ribosome then switches to translate the ORF on the tmRNA, the nascent peptide is terminated with the 'tag peptide' encoded by the tmRNA and thus targeted for degradation. This is Small ribosomal subunit protein bS1 (rpsA) from Mycolicibacterium smegmatis (strain ATCC 700084 / mc(2)155) (Mycobacterium smegmatis).